The chain runs to 492 residues: E3 ubiquitin-protein ligase TRIM35 (492 aa).

Met-1 carries the post-translational modification N-acetylmethionine. Ser-4 and Ser-8 each carry phosphoserine. The RING-type zinc finger occupies 21–61; that stretch reads CAVCYDPFRDAVTLRCGHNFCRGCVSRCWEVQVSPTCPVCK. The B box-type zinc-finger motif lies at 96 to 137; the sequence is RFSRVCRLHRGQLSLFCLEDKELLCCSCQADPRHQGHRVQPV. Zn(2+)-binding residues include Cys-101, His-104, Cys-123, and His-129. Residues 210–249 are a coiled coil; sequence AEETRQKQLLADEKMKQLTEETEVLAHEIERLQMEMKEDD. In terms of domain architecture, B30.2/SPRY spans 283-486; sequence YLGSLQYRVW…LRICPLHISV (204 aa).

Interacts with PKM isoform M2, but not isoform M1; this interaction may compete with that between PKM and FGFR1, and hence reduces FGFR1-dependent tyrosine phosphorylation of PKM. Interacts with IRF7; this interaction promotes IRF7 proteasomal degradation. Interacts with TRAF3; this interaction promotes TRAF3 activation.

Its subcellular location is the cytoplasm. The protein localises to the nucleus. The catalysed reaction is S-ubiquitinyl-[E2 ubiquitin-conjugating enzyme]-L-cysteine + [acceptor protein]-L-lysine = [E2 ubiquitin-conjugating enzyme]-L-cysteine + N(6)-ubiquitinyl-[acceptor protein]-L-lysine.. The protein operates within protein modification; protein ubiquitination. E3 ubiquitin-protein ligase that participates in multiple biological processes including cell death, glucose metabolism, and in particular, the innate immune response. Mediates 'Lys-63'-linked polyubiquitination of TRAF3 thereby promoting type I interferon production via RIG-I signaling pathway. Can also catalyze 'Lys-48'-linked polyubiquitination and proteasomal degradation of viral proteins such as influenza virus PB2. Acts as a negative feedback regulator of TLR7- and TLR9-triggered signaling. Mechanistically, promotes the 'Lys-48'-linked ubiquitination of IRF7 and induces its degradation via a proteasome-dependent pathway. Reduces FGFR1-dependent tyrosine phosphorylation of PKM, inhibiting PKM-dependent lactate production, glucose metabolism, and cell growth. The polypeptide is E3 ubiquitin-protein ligase TRIM35 (TRIM35) (Pongo abelii (Sumatran orangutan)).